A 1236-amino-acid chain; its full sequence is DNA-directed RNA polymerase subunit beta (1236 aa).

The disordered stretch occupies residues 1193-1212 (PDVLDDDSYDQNNDEDIDEI). Acidic residues predominate over residues 1194-1212 (DVLDDDSYDQNNDEDIDEI).

It belongs to the RNA polymerase beta chain family. In terms of assembly, the RNAP catalytic core consists of 2 alpha, 1 beta, 1 beta' and 1 omega subunit. When a sigma factor is associated with the core the holoenzyme is formed, which can initiate transcription.

The catalysed reaction is RNA(n) + a ribonucleoside 5'-triphosphate = RNA(n+1) + diphosphate. Its function is as follows. DNA-dependent RNA polymerase catalyzes the transcription of DNA into RNA using the four ribonucleoside triphosphates as substrates. The polypeptide is DNA-directed RNA polymerase subunit beta (Clostridium beijerinckii (strain ATCC 51743 / NCIMB 8052) (Clostridium acetobutylicum)).